Reading from the N-terminus, the 163-residue chain is Ureidoglycolate lyase (163 aa).

It belongs to the ureidoglycolate lyase family. Homodimer. It depends on Ni(2+) as a cofactor.

It carries out the reaction (S)-ureidoglycolate = urea + glyoxylate. It functions in the pathway nitrogen metabolism; (S)-allantoin degradation. Catalyzes the catabolism of the allantoin degradation intermediate (S)-ureidoglycolate, generating urea and glyoxylate. Involved in the utilization of allantoin as nitrogen source. The polypeptide is Ureidoglycolate lyase (Mesorhizobium japonicum (strain LMG 29417 / CECT 9101 / MAFF 303099) (Mesorhizobium loti (strain MAFF 303099))).